We begin with the raw amino-acid sequence, 332 residues long: 4-hydroxy-3-methylbut-2-enyl diphosphate reductase (332 aa).

Cysteine 13 serves as a coordination point for [4Fe-4S] cluster. 2 residues coordinate (2E)-4-hydroxy-3-methylbut-2-enyl diphosphate: histidine 41 and histidine 75. Residues histidine 41 and histidine 75 each coordinate dimethylallyl diphosphate. Isopentenyl diphosphate-binding residues include histidine 41 and histidine 75. Cysteine 97 contributes to the [4Fe-4S] cluster binding site. Residue histidine 125 participates in (2E)-4-hydroxy-3-methylbut-2-enyl diphosphate binding. Dimethylallyl diphosphate is bound at residue histidine 125. Residue histidine 125 participates in isopentenyl diphosphate binding. The Proton donor role is filled by glutamate 127. A (2E)-4-hydroxy-3-methylbut-2-enyl diphosphate-binding site is contributed by threonine 168. Cysteine 229 contacts [4Fe-4S] cluster. (2E)-4-hydroxy-3-methylbut-2-enyl diphosphate-binding residues include serine 257, serine 258, asparagine 259, and serine 306. Residues serine 257, serine 258, asparagine 259, and serine 306 each coordinate dimethylallyl diphosphate. The isopentenyl diphosphate site is built by serine 257, serine 258, asparagine 259, and serine 306.

It belongs to the IspH family. [4Fe-4S] cluster serves as cofactor.

It catalyses the reaction isopentenyl diphosphate + 2 oxidized [2Fe-2S]-[ferredoxin] + H2O = (2E)-4-hydroxy-3-methylbut-2-enyl diphosphate + 2 reduced [2Fe-2S]-[ferredoxin] + 2 H(+). The catalysed reaction is dimethylallyl diphosphate + 2 oxidized [2Fe-2S]-[ferredoxin] + H2O = (2E)-4-hydroxy-3-methylbut-2-enyl diphosphate + 2 reduced [2Fe-2S]-[ferredoxin] + 2 H(+). Its pathway is isoprenoid biosynthesis; dimethylallyl diphosphate biosynthesis; dimethylallyl diphosphate from (2E)-4-hydroxy-3-methylbutenyl diphosphate: step 1/1. The protein operates within isoprenoid biosynthesis; isopentenyl diphosphate biosynthesis via DXP pathway; isopentenyl diphosphate from 1-deoxy-D-xylulose 5-phosphate: step 6/6. Catalyzes the conversion of 1-hydroxy-2-methyl-2-(E)-butenyl 4-diphosphate (HMBPP) into a mixture of isopentenyl diphosphate (IPP) and dimethylallyl diphosphate (DMAPP). Acts in the terminal step of the DOXP/MEP pathway for isoprenoid precursor biosynthesis. The polypeptide is 4-hydroxy-3-methylbut-2-enyl diphosphate reductase (Chlorobaculum parvum (strain DSM 263 / NCIMB 8327) (Chlorobium vibrioforme subsp. thiosulfatophilum)).